The chain runs to 366 residues: Aminomethyltransferase (366 aa).

It belongs to the GcvT family. In terms of assembly, the glycine cleavage system is composed of four proteins: P, T, L and H.

It catalyses the reaction N(6)-[(R)-S(8)-aminomethyldihydrolipoyl]-L-lysyl-[protein] + (6S)-5,6,7,8-tetrahydrofolate = N(6)-[(R)-dihydrolipoyl]-L-lysyl-[protein] + (6R)-5,10-methylene-5,6,7,8-tetrahydrofolate + NH4(+). The glycine cleavage system catalyzes the degradation of glycine. The sequence is that of Aminomethyltransferase from Bacillus anthracis (strain A0248).